We begin with the raw amino-acid sequence, 283 residues long: uncharacterized protein (283 aa).

A lipid anchor (N-myristoyl glycine; by host) is attached at glycine 2. N-linked (GlcNAc...) asparagine; by host glycans are attached at residues asparagine 31, asparagine 95, asparagine 105, asparagine 108, asparagine 137, and asparagine 147. Helical transmembrane passes span 181–201 (IIAA…VVYF) and 250–270 (FIVL…LDIP). Asparagine 277 is a glycosylation site (N-linked (GlcNAc...) asparagine; by host).

Its subcellular location is the membrane. This is an uncharacterized protein from Acanthamoeba polyphaga (Amoeba).